Reading from the N-terminus, the 471-residue chain is 7-dehydrocholesterol reductase (471 aa).

8 helical membrane passes run 36–56 (LVSV…FIMA), 95–115 (LYAL…DFCH), 144–164 (LQAW…LSWF), 173–193 (WIPL…FAMI), 233–253 (LFFN…SFAA), 262–282 (VTNS…DFFW), 302–322 (LGWG…LYLV), and 327–347 (QLST…YYIF). NADP(+) contacts are provided by residues Lys-354, Arg-358, Leu-391, Trp-396, and 403–404 (NY). Residues 416–436 (LACGGGHLLPYFYIIYMTILL) traverse the membrane as a helical segment. NADP(+) contacts are provided by residues Asp-443, 447–451 (CANKY), and Tyr-458.

Belongs to the ERG4/ERG24 family. As to quaternary structure, interacts with DHCR24; this interaction regulates DHCR7 activity. Interacts with TMEM147. Highest expression is detected in liver, followed by kidney and brain.

It localises to the endoplasmic reticulum membrane. It catalyses the reaction cholesterol + NADP(+) = 7-dehydrocholesterol + NADPH + H(+). It carries out the reaction 7-dehydrodesmosterol + NADPH + H(+) = desmosterol + NADP(+). The catalysed reaction is 5,6alpha-epoxy-5alpha-cholestan-3beta-ol + H2O = 5alpha-cholestane-3beta,5,6beta-triol. The enzyme catalyses 5,6beta-epoxy-5beta-cholestan-3beta-ol + H2O = 5alpha-cholestane-3beta,5,6beta-triol. Its pathway is steroid biosynthesis; cholesterol biosynthesis. Its function is as follows. Oxidoreductase that catalyzes the last step of the cholesterol synthesis pathway, which transforms cholesta-5,7-dien-3beta-ol (7-dehydrocholesterol,7-DHC) into cholesterol by reducing the C7-C8 double bond of its sterol core. Can also metabolize cholesta-5,7,24-trien-3beta-ol (7-dehydrodemosterol, 7-DHD) to desmosterol, which is then metabolized by the Delta(24)-sterol reductase (DHCR24) to cholesterol. Modulates ferroptosis (a form of regulated cell death driven by iron-dependent lipid peroxidation) through the metabolic breakdown of the anti-ferroptotic metabolites 7-DHC and 7-DHD which, when accumulated, divert the propagation of peroxyl radical-mediated damage from phospholipid components to its sterol core, protecting plasma and mitochondrial membranes from phospholipid autoxidation. Functionally, component of the microsomal antiestrogen binding site (AEBS), a multiproteic complex at the ER membrane that consists of an association between cholestenol Delta-isomerase/EBP and DHCR7. This complex is responsible for cholesterol-5,6-epoxide hydrolase (ChEH) activity, which consists in the hydration of cholesterol-5,6-epoxides (5,6-EC) into cholestane-3beta,5alpha,6beta-triol (CT). The precise role of each component of this complex has not been described yet. The protein is 7-dehydrocholesterol reductase (Dhcr7) of Rattus norvegicus (Rat).